The following is a 454-amino-acid chain: tRNA(Ile)-lysidine synthase (454 aa).

31 to 36 (SGGADS) contacts ATP.

It belongs to the tRNA(Ile)-lysidine synthase family.

Its subcellular location is the cytoplasm. The catalysed reaction is cytidine(34) in tRNA(Ile2) + L-lysine + ATP = lysidine(34) in tRNA(Ile2) + AMP + diphosphate + H(+). In terms of biological role, ligates lysine onto the cytidine present at position 34 of the AUA codon-specific tRNA(Ile) that contains the anticodon CAU, in an ATP-dependent manner. Cytidine is converted to lysidine, thus changing the amino acid specificity of the tRNA from methionine to isoleucine. The chain is tRNA(Ile)-lysidine synthase from Porphyromonas gingivalis (strain ATCC BAA-308 / W83).